Reading from the N-terminus, the 264-residue chain is Intermembrane phospholipid transport system ATP-binding protein MlaF (264 aa).

The ABC transporter domain occupies 6 to 242; that stretch reads IEVKNLTFKR…QDLRVVQFLK (237 aa). 38–45 is a binding site for ATP; the sequence is GPSGIGKT.

The protein belongs to the ABC transporter superfamily. MlaF family. In terms of assembly, the complex is composed of two ATP-binding proteins (MlaF), two transmembrane proteins (MlaE), two cytoplasmic solute-binding proteins (MlaB) and six periplasmic solute-binding proteins (MlaD).

It is found in the cell inner membrane. Part of the ABC transporter complex MlaFEDB, which is involved in a phospholipid transport pathway that maintains lipid asymmetry in the outer membrane by retrograde trafficking of phospholipids from the outer membrane to the inner membrane. Responsible for energy coupling to the transport system. The protein is Intermembrane phospholipid transport system ATP-binding protein MlaF of Haemophilus influenzae (strain ATCC 51907 / DSM 11121 / KW20 / Rd).